A 156-amino-acid chain; its full sequence is ATP synthase subunit b 2 (156 aa).

The helical transmembrane segment at 6-26 (SMFGQAISFVIFVWLCMKYVW) threads the bilayer.

Belongs to the ATPase B chain family. F-type ATPases have 2 components, F(1) - the catalytic core - and F(0) - the membrane proton channel. F(1) has five subunits: alpha(3), beta(3), gamma(1), delta(1), epsilon(1). F(0) has three main subunits: a(1), b(2) and c(10-14). The alpha and beta chains form an alternating ring which encloses part of the gamma chain. F(1) is attached to F(0) by a central stalk formed by the gamma and epsilon chains, while a peripheral stalk is formed by the delta and b chains.

The protein localises to the cell inner membrane. Functionally, f(1)F(0) ATP synthase produces ATP from ADP in the presence of a proton or sodium gradient. F-type ATPases consist of two structural domains, F(1) containing the extramembraneous catalytic core and F(0) containing the membrane proton channel, linked together by a central stalk and a peripheral stalk. During catalysis, ATP synthesis in the catalytic domain of F(1) is coupled via a rotary mechanism of the central stalk subunits to proton translocation. In terms of biological role, component of the F(0) channel, it forms part of the peripheral stalk, linking F(1) to F(0). The polypeptide is ATP synthase subunit b 2 (Vibrio campbellii (strain ATCC BAA-1116)).